Consider the following 346-residue polypeptide: Heterogeneous nuclear ribonucleoprotein A1 (346 aa).

2 RRM domains span residues R23 to E123 and K114 to S191. Composition is skewed to basic and acidic residues over residues T92–S107 and G189–Q215. Disordered stretches follow at residues T92 to V111 and G189 to Y346. Composition is skewed to gly residues over residues R216 to G296 and G303 to S331. Positions G332 to Y346 are enriched in low complexity.

It localises to the nucleus. Its subcellular location is the chromosome. It is found in the telomere. Functionally, this protein is a component of ribonucleosomes. Overexpression gradually increases telomere length, leading to increase lifespan. The protein is Heterogeneous nuclear ribonucleoprotein A1 of Caenorhabditis elegans.